Here is a 373-residue protein sequence, read N- to C-terminus: Pulmonary surfactant-associated protein B (373 aa).

The signal sequence occupies residues 1 to 22; the sequence is MAKSHLLPWLLLLPILCGPGTA. The propeptide occupies 23 to 187; it reads AAITYSLACA…PQTQDLSEQL (165 aa). Residues 24–64 form the Saposin A-type domain; it reads AITYSLACAQGPEFWCQSLEQALQCRALGHCLQEVWGHVEA. Saposin B-type domains follow at residues 64 to 146, 191 to 268, and 287 to 362; these read ADDL…KPRH, PIPY…SSED, and QDSD…AAPF. Intrachain disulfides connect Cys68/Cys142, Cys71/Cys136, Cys99/Cys111, Cys195/Cys264, Cys198/Cys258, Cys222/Cys233, Cys291/Cys358, Cys294/Cys352, and Cys317/Cys327. Residue Asn73 is glycosylated (N-linked (GlcNAc...) asparagine). The propeptide occupies 267 to 373; that stretch reads EDSAGPALPA…PLQCVHSPHF (107 aa). The N-linked (GlcNAc...) asparagine glycan is linked to Asn303.

Homodimer; disulfide-linked.

It is found in the secreted. Its subcellular location is the extracellular space. It localises to the surface film. Functionally, pulmonary surfactant-associated proteins promote alveolar stability by lowering the surface tension at the air-liquid interface in the peripheral air spaces. SP-B increases the collapse pressure of palmitic acid to nearly 70 millinewtons per meter. This chain is Pulmonary surfactant-associated protein B (SFTPB), found in Bos taurus (Bovine).